Consider the following 123-residue polypeptide: Small ribosomal subunit protein uS11 (123 aa).

The interval 1-22 is disordered; sequence MAKKRKKKLSSPEGISHIHASA.

Belongs to the universal ribosomal protein uS11 family. As to quaternary structure, part of the 30S ribosomal subunit. Interacts with proteins S7 and S18. Binds to IF-3.

Functionally, located on the platform of the 30S subunit, it bridges several disparate RNA helices of the 16S rRNA. Forms part of the Shine-Dalgarno cleft in the 70S ribosome. The sequence is that of Small ribosomal subunit protein uS11 from Malacoplasma penetrans (strain HF-2) (Mycoplasma penetrans).